Here is a 32-residue protein sequence, read N- to C-terminus: ATP synthase 28 kDa subunit, mitochondrial (32 aa).

Its subcellular location is the mitochondrion. It localises to the mitochondrion inner membrane. Functionally, mitochondrial membrane ATP synthase (F(1)F(0) ATP synthase or Complex V) produces ATP from ADP in the presence of a proton gradient across the membrane which is generated by electron transport complexes of the respiratory chain. F-type ATPases consist of two structural domains, F(1) - containing the extramembraneous catalytic core and F(0) - containing the membrane proton channel, linked together by a central stalk and a peripheral stalk. During catalysis, ATP synthesis in the catalytic domain of F(1) is coupled via a rotary mechanism of the central stalk subunits to proton translocation. Part of the complex F(0) domain. The sequence is that of ATP synthase 28 kDa subunit, mitochondrial from Spinacia oleracea (Spinach).